Consider the following 379-residue polypeptide: L-demethylnoviosyl transferase (379 aa).

This sequence belongs to the glycosyltransferase 28 family.

It carries out the reaction dTDP-4-O-demethyl-beta-L-noviose + novobiocic acid = desmethyldescarbamoylnovobiocin + dTDP + H(+). It functions in the pathway antibiotic biosynthesis; novobiocin biosynthesis. Inhibited by TDP-L-rhamnose, the sugar donor that most closely structurally resembles the natural substrate dTDP-beta-L-noviose. Functionally, catalyzes the transfer of L-noviose from dTDP-4-O-demethyl-beta-L-noviose to the phenolic oxygen of novobiocic acid, creating the full ABC ring system in the novobiocin biosynthesis pathway. Novobiocin is an aminocoumarin family antibiotic that targets bacterial DNA gyrases. Also shows activity with variant coumarin aglycones, suggesting it may be a promiscuous catalyst for noviosylation of a range of planar scaffolds. Does not show activity with TDP-L-rhamnose. The protein is L-demethylnoviosyl transferase (novM) of Streptomyces niveus (Streptomyces spheroides).